The following is a 167-amino-acid chain: UPF0225 protein VP1145 (167 aa).

This sequence belongs to the UPF0225 family.

The protein is UPF0225 protein VP1145 of Vibrio parahaemolyticus serotype O3:K6 (strain RIMD 2210633).